A 587-amino-acid polypeptide reads, in one-letter code: Polyphenol oxidase E, chloroplastic (587 aa).

The transit peptide at 1–87 (MSSSSSITTT…AANLAPLATA (87 aa)) directs the protein to the chloroplast. Disulfide bonds link cysteine 98–cysteine 114 and cysteine 113–cysteine 180. Positions 179, 197, 206, 328, 332, and 363 each coordinate Cu cation. A cross-link (2'-(S-cysteinyl)-histidine (Cys-His)) is located at residues 183-197 (CNGAYKVGGKELQVH).

Belongs to the tyrosinase family. It depends on Cu(2+) as a cofactor.

It is found in the plastid. It localises to the chloroplast thylakoid lumen. The catalysed reaction is 2 catechol + O2 = 2 1,2-benzoquinone + 2 H2O. Catalyzes the oxidation of mono- and o-diphenols to o-diquinones. This chain is Polyphenol oxidase E, chloroplastic, found in Solanum lycopersicum (Tomato).